The primary structure comprises 431 residues: Tol-Pal system protein TolB (431 aa).

Residues 1–26 form the signal peptide; it reads MRLMTKLGFRALVASCLIAAGAAANA. Positions 411–431 are disordered; it reads PQILSVQGGSVREPSWGPFMQ.

The protein belongs to the TolB family. In terms of assembly, the Tol-Pal system is composed of five core proteins: the inner membrane proteins TolA, TolQ and TolR, the periplasmic protein TolB and the outer membrane protein Pal. They form a network linking the inner and outer membranes and the peptidoglycan layer.

It localises to the periplasm. Functionally, part of the Tol-Pal system, which plays a role in outer membrane invagination during cell division and is important for maintaining outer membrane integrity. The chain is Tol-Pal system protein TolB from Burkholderia ambifaria (strain ATCC BAA-244 / DSM 16087 / CCUG 44356 / LMG 19182 / AMMD) (Burkholderia cepacia (strain AMMD)).